Consider the following 198-residue polypeptide: Phosphoheptose isomerase (198 aa).

The SIS domain maps to A36–V195. N51–G53 contacts substrate. 2 residues coordinate Zn(2+): H60 and E64. Residues E64, N93 to D94, S119 to S121, S124, and Q171 contribute to the substrate site. Q171 and H179 together coordinate Zn(2+).

This sequence belongs to the SIS family. GmhA subfamily. The cofactor is Zn(2+).

The protein localises to the cytoplasm. It carries out the reaction 2 D-sedoheptulose 7-phosphate = D-glycero-alpha-D-manno-heptose 7-phosphate + D-glycero-beta-D-manno-heptose 7-phosphate. The protein operates within carbohydrate biosynthesis; D-glycero-D-manno-heptose 7-phosphate biosynthesis; D-glycero-alpha-D-manno-heptose 7-phosphate and D-glycero-beta-D-manno-heptose 7-phosphate from sedoheptulose 7-phosphate: step 1/1. It functions in the pathway cell surface structure biogenesis; S-layer biogenesis. Its function is as follows. Catalyzes the isomerization of sedoheptulose 7-phosphate in D-glycero-D-manno-heptose 7-phosphate. This is Phosphoheptose isomerase from Aneurinibacillus thermoaerophilus.